A 134-amino-acid polypeptide reads, in one-letter code: Phospholipase A2 (134 aa).

The Ca(2+) site is built by W8, G10, and G12. 5 disulfides stabilise this stretch: C9–C31, C30–C70, C37–C63, C61–C95, and C105–C113. The N-linked (GlcNAc...) asparagine glycan is linked to N13. H34 is a catalytic residue. D35 provides a ligand contact to Ca(2+). D64 is a catalytic residue.

It belongs to the phospholipase A2 family. Group III subfamily. Requires Ca(2+) as cofactor. As to expression, expressed by the venom gland.

It localises to the secreted. It carries out the reaction a 1,2-diacyl-sn-glycero-3-phosphocholine + H2O = a 1-acyl-sn-glycero-3-phosphocholine + a fatty acid + H(+). In terms of biological role, PLA2 catalyzes the calcium-dependent hydrolysis of the 2-acyl groups in 3-sn-phosphoglycerides. This Apis cerana cerana (Oriental honeybee) protein is Phospholipase A2.